The following is an 838-amino-acid chain: Outer membrane usher protein YraJ (838 aa).

An N-terminal signal peptide occupies residues 1–40; the sequence is MPQRHHQGHKRTPKQLALIIKRCLPMVLTGSGMLCTTANA. A disulfide bridge connects residues Cys815 and Cys837.

It belongs to the fimbrial export usher family.

The protein resides in the cell outer membrane. Functionally, part of the yraHIJK fimbrial operon. Could contribute to adhesion to various surfaces in specific environmental niches. Increases adhesion to eukaryotic T24 bladder epithelial cells in the absence of fim operon. Probably involved in the export and assembly of fimbrial subunits across the outer membrane. In Escherichia coli (strain K12), this protein is Outer membrane usher protein YraJ (yraJ).